The following is a 141-amino-acid chain: Hemoglobin subunit alpha-D (141 aa).

The Globin domain occupies 1-141 (MLTADDKKLI…VAAVLAEKYR (141 aa)). 2 residues coordinate heme b: His58 and His87.

Belongs to the globin family. In terms of assembly, heterotetramer of two alpha-D chains and two beta chains. Red blood cells.

Its function is as follows. Involved in oxygen transport from the lung to the various peripheral tissues. The protein is Hemoglobin subunit alpha-D (HBAD) of Aegypius monachus (Cinereous vulture).